We begin with the raw amino-acid sequence, 125 residues long: Upsalin (125 aa).

Positions 1-16 (MFPTHVLLIVIACVTA) are cleaved as a signal peptide.

Weakly glycosylated. Expressed at highest levels in mantle, followed by adductor muscle. Found in the nacreous shell layer (at protein level).

It localises to the secreted. This Unio pictorum (Painter's mussel) protein is Upsalin.